The following is a 515-amino-acid chain: Mucin-like protein Glc1.8a (515 aa).

Positions 1–20 (MSQITLIILILAIGFSCTKS) are cleaved as a signal peptide. Residues 21–467 (HPINSTRDGE…ANDIKKPAFP (447 aa)) are Extracellular-facing. 28 N-linked (GlcNAc...) asparagine; by host glycosylation sites follow: Asn-24, Asn-45, Asn-51, Asn-60, Asn-85, Asn-93, Asn-102, Asn-123, Asn-129, Asn-138, Asn-180, Asn-201, Asn-207, Asn-216, Asn-258, Asn-279, Asn-285, Asn-319, Asn-327, Asn-336, Asn-357, Asn-363, Asn-372, Asn-397, Asn-405, Asn-413, Asn-434, and Asn-441. The segment at 80–114 (SKKDENITGQSEINTSAKSQPINSTRDGEDSGTDL) is disordered. The segment covering 86-104 (ITGQSEINTSAKSQPINST) has biased composition (polar residues). The disordered stretch occupies residues 314-358 (SKKDENVTGQSEINTSAKSQPINSTRDGEDSGTDLKNLLTDPANT). A compositionally biased stretch (polar residues) spans 320–338 (VTGQSEINTSAKSQPINST). A disordered region spans residues 393 to 413 (RKDENVTGQSEFNISTNSNLN). The chain crosses the membrane as a helical span at residues 468 to 488 (YCIILITFQIVTVGMIIYLVF). At 489 to 515 (RTMRKPCQSERAIPLNTFGFGNNSSHE) the chain is on the cytoplasmic side.

This sequence belongs to the polydnaviridae Glc1.8 protein family.

Its subcellular location is the host membrane. Involved in suppression of the insect cellular immune response. Inhibits host hemocyte adhesion and phagocytosis. This is Mucin-like protein Glc1.8a (O9) from Microplitis demolitor (Parasitoid wasp).